A 308-amino-acid polypeptide reads, in one-letter code: tRNA dimethylallyltransferase (308 aa).

14-21 (GPTASGKT) serves as a coordination point for ATP. Position 16-21 (16-21 (TASGKT)) interacts with substrate. Interaction with substrate tRNA regions lie at residues 39-42 (DSAL), 163-167 (QRLSR), and 244-249 (RCVGYR).

This sequence belongs to the IPP transferase family. In terms of assembly, monomer. The cofactor is Mg(2+).

The enzyme catalyses adenosine(37) in tRNA + dimethylallyl diphosphate = N(6)-dimethylallyladenosine(37) in tRNA + diphosphate. In terms of biological role, catalyzes the transfer of a dimethylallyl group onto the adenine at position 37 in tRNAs that read codons beginning with uridine, leading to the formation of N6-(dimethylallyl)adenosine (i(6)A). In Shewanella baltica (strain OS185), this protein is tRNA dimethylallyltransferase.